The sequence spans 630 residues: MSQLSAPGAENTRRLLAMALGSVGVVYGDIGTSPLYAFREALRPVSHDGVTDVEIVGLISLMIWALTIIVTIKYVLFLLRADNQGEGGTLSLLALLMKTANGHTAILFFMGIAGAALFIGDAMITPALSVLSAVEGLKLVTPALSDYVVPIAVVILLFLFAVQSKGTAAVSKFFGPITLVWFLVMGAVGFMHIADDLSIFRAFNPYYAVAFLFNEGYVGIVVLGAVFLTVTGAEALYADLGHFGRRPIQWAWFTVVFPALTLNYLGQGAFVLKNPEAMSDPFFLMFPKWALLPAVILATAATIIASQAVITGAFSLTRQAIHLGFLPRMAIFHTSETHTGQIYLPNVNTLLMFGVMALVFIFGSSESLATAYGISVTGAMVVTTVLAFEFLRMRWNWPAWWAAGVLLPLFALELVFLGANMLKIHDGGYVPILIAATFIVIMWTWKRGTAILHTKTRHIDIPLERFIKSIERQSEHAPVSVPGTAIFLTSDPESTPAALLHNIKHNHVLHQQNFILTIRTANTPKVPREERVSARRLSERFTLMEVRFGFMETQNVSQALGLFRKSGLKFDIMSTSFYLGRRKLVPDAQSGMPHWQDRLFIALANAAIDPSDYFRLPTNRVVELGSHVII.

The next 12 helical transmembrane spans lie at 15–35, 58–78, 104–124, 142–162, 173–193, 208–228, 252–272, 290–310, 342–362, 368–388, 399–419, and 424–444; these read LLAM…TSPL, LISL…VLFL, TAIL…DAMI, PALS…LFAV, FFGP…FMHI, AVAF…AVFL, WFTV…AFVL, ALLP…QAVI, IYLP…VFIF, LATA…VLAF, AWWA…FLGA, and IHDG…IMWT.

The protein belongs to the HAK/KUP transporter (TC 2.A.72) family.

Its subcellular location is the cell inner membrane. It carries out the reaction K(+)(in) + H(+)(in) = K(+)(out) + H(+)(out). Functionally, transport of potassium into the cell. Likely operates as a K(+):H(+) symporter. This Sinorhizobium medicae (strain WSM419) (Ensifer medicae) protein is Probable potassium transport system protein Kup 1.